The chain runs to 170 residues: Probable T4-type lysozyme 1 (170 aa).

The active-site Proton donor is E13. The Nucleophile role is filled by D22.

It belongs to the glycosyl hydrolase 24 family.

It catalyses the reaction Hydrolysis of (1-&gt;4)-beta-linkages between N-acetylmuramic acid and N-acetyl-D-glucosamine residues in a peptidoglycan and between N-acetyl-D-glucosamine residues in chitodextrins.. In Dictyostelium discoideum (Social amoeba), this protein is Probable T4-type lysozyme 1.